A 551-amino-acid chain; its full sequence is Cytochrome P450 monooxygenase virE (551 aa).

A signal peptide spans 1–25 (MPKPWVVFGLGTLVLFLWRLNKIGR). An N-linked (GlcNAc...) asparagine glycan is attached at N392. C439 is a heme binding site.

This sequence belongs to the cytochrome P450 family. It depends on heme as a cofactor.

Its pathway is secondary metabolite biosynthesis. In terms of biological role, cytochrome P450 monooxygenase; part of the gene cluster that mediates the biosynthesis of virensols and trichoxide, fungal natural products that contain or are derived from a salicylaldehyde core. The pathway begins with the synthesis of the reduced chain in virensol C by the highly reducing polyketide synthase virA via condensation of one acetate and 8 malonate units. VirA has interesting programming rules since the first 2 ketides are fully reduced, the 3 following ketides undergo beta-dehydration, and the last 3 ketides are only reduced to beta-hydroxys to yield the trihydroxy portion. The production of aldehyde virensol C by virA alone is surprising, since virA does not contain a reductase (R) domain that is typically associated with reductive product release in HRPKS. The cupin-domain enzyme virC is involved in enhancing virA product turnover. The short-chain dehydrogenase virB then oxidizes the C-7 alcohol of virensol C to a ketone, yielding virensol D. Virensol D is further transformed to salicylaldehyde 5-deoxyaurocitrin by the short-chain dehydrogenase virD. VirD catalyzes the dehydrogenation of C-3 to form the beta-ketone aldehyde, which is followed by the generation of the nucleophilic C-2 that is required for the intramolecular aldol condensation between C-2 and C-7, itself followed by dehydration and aromatization which leads to salicylaldehyde 5-deoxyaurocitrin. While the dehydrogenation of virensol D is definitely catalyzed by virD, the aldol condensation and dehydration may be uncatalyzed or assisted by virD. The short chain dehydrogenase virG then converts salicylaldehyde 5-deoxyaurocitrin into virensol B which is further hydroxylated by the cytochrome P450 monooxygenase virE to yield the hydroquinone virensol A. VirI then may oxidize virensol A to form the quinone, while virH performs the epoxidation. Finally, the two remaining short-chain dehydrogenases, virK and virL, are probably responsible for reducing the ketones to the corresponding alcohols to furnish the epoxycyclohexanol structure in trichoxide. The chain is Cytochrome P450 monooxygenase virE from Hypocrea virens (strain Gv29-8 / FGSC 10586) (Gliocladium virens).